The sequence spans 186 residues: Glutathione peroxidase 7 (186 aa).

The N-terminal stretch at methionine 1–alanine 18 is a signal peptide. The active site involves cysteine 56.

The protein belongs to the glutathione peroxidase family.

It localises to the secreted. It carries out the reaction 2 glutathione + H2O2 = glutathione disulfide + 2 H2O. The sequence is that of Glutathione peroxidase 7 (GPX7) from Bos taurus (Bovine).